The primary structure comprises 150 residues: Aspartate 1-decarboxylase (150 aa).

The active-site Schiff-base intermediate with substrate; via pyruvic acid is the S24. S24 is modified (pyruvic acid (Ser)). Residue T56 coordinates substrate. Y57 (proton donor) is an active-site residue. Residue 72 to 74 (GAA) participates in substrate binding.

The protein belongs to the PanD family. As to quaternary structure, heterooctamer of four alpha and four beta subunits. The cofactor is pyruvate. In terms of processing, is synthesized initially as an inactive proenzyme, which is activated by self-cleavage at a specific serine bond to produce a beta-subunit with a hydroxyl group at its C-terminus and an alpha-subunit with a pyruvoyl group at its N-terminus.

It localises to the cytoplasm. The enzyme catalyses L-aspartate + H(+) = beta-alanine + CO2. It participates in cofactor biosynthesis; (R)-pantothenate biosynthesis; beta-alanine from L-aspartate: step 1/1. Its function is as follows. Catalyzes the pyruvoyl-dependent decarboxylation of aspartate to produce beta-alanine. The polypeptide is Aspartate 1-decarboxylase (Beijerinckia indica subsp. indica (strain ATCC 9039 / DSM 1715 / NCIMB 8712)).